A 205-amino-acid polypeptide reads, in one-letter code: Purine catabolism protein PucB (205 aa).

Its pathway is purine metabolism; hypoxanthine degradation. Functionally, required for xanthine dehydrogenase activity. Could be involved in formation of the molybdenum cofactor required by xanthine dehydrogenase. The chain is Purine catabolism protein PucB (pucB) from Bacillus subtilis (strain 168).